A 157-amino-acid chain; its full sequence is SsrA-binding protein (157 aa).

Belongs to the SmpB family.

It is found in the cytoplasm. In terms of biological role, required for rescue of stalled ribosomes mediated by trans-translation. Binds to transfer-messenger RNA (tmRNA), required for stable association of tmRNA with ribosomes. tmRNA and SmpB together mimic tRNA shape, replacing the anticodon stem-loop with SmpB. tmRNA is encoded by the ssrA gene; the 2 termini fold to resemble tRNA(Ala) and it encodes a 'tag peptide', a short internal open reading frame. During trans-translation Ala-aminoacylated tmRNA acts like a tRNA, entering the A-site of stalled ribosomes, displacing the stalled mRNA. The ribosome then switches to translate the ORF on the tmRNA; the nascent peptide is terminated with the 'tag peptide' encoded by the tmRNA and targeted for degradation. The ribosome is freed to recommence translation, which seems to be the essential function of trans-translation. The protein is SsrA-binding protein of Christiangramia forsetii (strain DSM 17595 / CGMCC 1.15422 / KT0803) (Gramella forsetii).